The sequence spans 1609 residues: Probable outer membrane protein pmp21 (1609 aa).

An N-terminal signal peptide occupies residues 1–30 (MVAKKTVRSYRSSFSHSVIVAILSAGIAFE). A compositionally biased stretch (polar residues) spans 132–145 (FSQPTQEPDTSNAV). 2 disordered regions span residues 132–183 (FSQP…KSPE) and 640–677 (TAPV…EVPP). Basic and acidic residues-rich tracts occupy residues 149–175 (ISSD…KEVS) and 651–672 (NKDE…KTVE). The Autotransporter domain maps to 1328–1609 (ELDFSTNVWG…DFNGGIRIIF (282 aa)).

It belongs to the PMP outer membrane protein family.

Its subcellular location is the secreted. The protein localises to the cell wall. The protein resides in the cell outer membrane. The chain is Probable outer membrane protein pmp21 (pmp21) from Chlamydia pneumoniae (Chlamydophila pneumoniae).